The chain runs to 128 residues: D-ribose pyranase (128 aa).

Histidine 20 (proton donor) is an active-site residue. Substrate-binding positions include aspartate 28, histidine 95, and 117 to 119; that span reads YSN.

This sequence belongs to the RbsD / FucU family. RbsD subfamily. Homodecamer.

Its subcellular location is the cytoplasm. The catalysed reaction is beta-D-ribopyranose = beta-D-ribofuranose. Its pathway is carbohydrate metabolism; D-ribose degradation; D-ribose 5-phosphate from beta-D-ribopyranose: step 1/2. In terms of biological role, catalyzes the interconversion of beta-pyran and beta-furan forms of D-ribose. The sequence is that of D-ribose pyranase from Thermosipho africanus (strain TCF52B).